The chain runs to 198 residues: Sporulation-specific protein 16 (198 aa).

Necessary for efficient spore formation. This is Sporulation-specific protein 16 (SPO16) from Saccharomyces cerevisiae (strain ATCC 204508 / S288c) (Baker's yeast).